A 486-amino-acid chain; its full sequence is Malonate-semialdehyde dehydrogenase 2 (486 aa).

NAD(+) is bound by residues phenylalanine 154, lysine 178, glutamate 181, arginine 182, and serine 231. The active-site Nucleophile is cysteine 286. Glutamate 386 is a binding site for NAD(+).

This sequence belongs to the aldehyde dehydrogenase family. IolA subfamily. In terms of assembly, homotetramer.

The catalysed reaction is 3-oxopropanoate + NAD(+) + CoA + H2O = hydrogencarbonate + acetyl-CoA + NADH + H(+). It carries out the reaction 2-methyl-3-oxopropanoate + NAD(+) + CoA + H2O = propanoyl-CoA + hydrogencarbonate + NADH + H(+). It participates in polyol metabolism; myo-inositol degradation into acetyl-CoA; acetyl-CoA from myo-inositol: step 7/7. Catalyzes the oxidation of malonate semialdehyde (MSA) and methylmalonate semialdehyde (MMSA) into acetyl-CoA and propanoyl-CoA, respectively. Is involved in a myo-inositol catabolic pathway. Bicarbonate, and not CO2, is the end-product of the enzymatic reaction. The protein is Malonate-semialdehyde dehydrogenase 2 of Oceanobacillus iheyensis (strain DSM 14371 / CIP 107618 / JCM 11309 / KCTC 3954 / HTE831).